The following is a 421-amino-acid chain: Testin (421 aa).

A PET domain is found at 92-199 (MILTNPVAAK…GDVKLPCEMD (108 aa)). The segment at 133-164 (EKQPVAGSEGAQYRKKQLAKQLPAHDQDPSKC) is disordered. Positions 155 to 164 (PAHDQDPSKC) are enriched in basic and acidic residues. 3 consecutive LIM zinc-binding domains span residues 234 to 297 (YSCY…CDSE), 299 to 359 (PRCA…NHAV), and 362 to 421 (QGCH…KMMS).

Belongs to the prickle / espinas / testin family. As to quaternary structure, interacts via LIM domain 1 with ZYX. Interacts (via LIM domain 3) with ENAH and VASP. Interacts with ALKBH4, talin, actin, alpha-actinin, GRIP1 and PXN. Interacts (via LIM domain 2) with ACTL7A (via N-terminus). Heterodimer with ACTL7A; the heterodimer interacts with ENAH to form a heterotrimer.

It localises to the cytoplasm. Its subcellular location is the cell junction. The protein localises to the focal adhesion. In terms of biological role, scaffold protein that may play a role in cell adhesion, cell spreading and in the reorganization of the actin cytoskeleton. Plays a role in the regulation of cell proliferation. May act as a tumor suppressor. This Microcebus murinus (Gray mouse lemur) protein is Testin (TES).